The following is a 309-amino-acid chain: Thioesterase lcsJ (309 aa).

The helical transmembrane segment at 11 to 31 (IAQVHGFVFSWWGVILLLAII) threads the bilayer. Positions 61 to 83 (ASPTAENAQRRVPKTPKTGATDT) are disordered. Asn-112 is a glycosylation site (N-linked (GlcNAc...) asparagine). The tract at residues 239–275 (SGWIPPRPESTGNSKSLDSLQANGHGATENGKHDAKD) is disordered. The span at 248-260 (STGNSKSLDSLQA) shows a compositional bias: polar residues.

Belongs to the lcsJ thioesterase family.

It is found in the membrane. Its pathway is secondary metabolite biosynthesis. Thioesterase; part of the gene cluster that mediates the biosynthesis of the lipopeptide antibiotics leucinostatins that show extensive biological activities, including antimalarial, antiviral, antibacterial, antifungal, and antitumor activities, as well as phytotoxic. Leucinostatin A contains nine amino acid residues, including the unusual amino acid 4-methyl-L-proline (MePro), 2-amino-6-hydroxy-4-methyl-8-oxodecanoic acid (AHyMeOA), 3-hydroxyleucine (HyLeu), alpha-aminoisobutyric acid (AIB), beta-Ala, a 4-methylhex-2-enoic acid at the N-terminus as well as a N1,N1-dimethylpropane-1,2-diamine (DPD) at the C-terminus. The biosynthesis of leucinostatins is probably initiated with the assembly of 4-methylhex-2-enoic acid by a reducing PKS. Two reducing polyketide synthases, lcsB and lcsC, have been identified in the cluster and it is not clear which is the one that assembles 4-methylhex-2-enoic acid since both contain KS, AT, DH, cMT, ER, KR and ACP domains. The polyketide residue might be transferred to the NRPS lcsA, mediated by two additional enzymes, the acyl-CoA ligase lcsD and the thioesterase lcsE. The linear polyketide carboxylic acid, which is released from PKS, is converted to a CoA thioester by lcsD, and then lcsE hydrolyzes the thiol bond and shuttles the polyketide intermediate to lcsA. The C domain of the first module catalyzed the condensation of 4-methylhex-2-enoic acid and MePro carried by domain A1, followed by successive condensations of nine amino acids to trigger the elongation of the linear peptide. A5 and A6 domains of lcsA are proposed to incorporate leucine, A2 AHyMeOA, and A3 incorporates HyLeu. A4, A7 and A8 incorporate AIB. The AHyMeOA in leucinostatin A activated by the A2 might be produced by the second PKS (lcsB or lcsC) present within the cluster. The MePro is probably produced via leucine cyclization and may originate from a separate pathway, independent of the cluster. Another nonproteinogenic amino acid, beta-Ala, could be produced by an aspartic acid decarboxylase also localized outside of the cluster. Two candidates are VFPBJ_01400 and VFPBJ_10476. The final peptide scaffold may be released by the NAD(P)H-dependent thioester reductase (TE) at the C-terminal region of lcsA. Transamination of the lcsA product by the transaminase lcsP may produce DPD at the C-terminus. Further hydroxylation steps performed alternatively by the cytochrome P450 monooxygenases lcsI, lcsK and lcsN then yield the non-methylated leucinostatins precursor. It is also possible that leucines can be hydroxylated prior to their incorporation into the peptide. Varying extents of methylation then lead to the formation of leucinostatins A and B. The chain is Thioesterase lcsJ from Purpureocillium lilacinum (Paecilomyces lilacinus).